The chain runs to 383 residues: TOM1-like protein 2 (383 aa).

One can recognise a VHS domain in the interval 45–178 (ATLETLEEPN…GLHARGEENS (134 aa)). One can recognise a GAT domain in the interval 223–310 (LSIKDKKEQI…VLSSYKKPDE (88 aa)). The interval 305–383 (YKKPDETEKK…LGLSSDEDEK (79 aa)) is disordered. Basic and acidic residues-rich tracts occupy residues 306 to 316 (KKPDETEKKAS) and 339 to 354 (EPVK…KHSE). Phosphoserine is present on residues S377 and S378.

The protein belongs to the TOM1 family. In terms of tissue distribution, ubiquitously expressed.

The protein resides in the cytoplasm. It is found in the membrane. In terms of biological role, binds ubiquitin in vitro. Might contribute to the loading of the ESCRT machinery. The chain is TOM1-like protein 2 from Arabidopsis thaliana (Mouse-ear cress).